The following is a 137-amino-acid chain: Protein E6 (137 aa).

Zinc fingers lie at residues cysteine 17–cysteine 53 and cysteine 90–cysteine 127.

The protein belongs to the papillomaviridae E6 protein family. As to quaternary structure, forms homodimers. Interacts with ubiquitin-protein ligase UBE3A/E6-AP; this interaction stimulates UBE3A ubiquitin activity. Interacts with host BAK1. Interacts with human FBLN1.

The protein localises to the host cytoplasm. The protein resides in the host nucleus. Functionally, plays a major role in the induction and maintenance of cellular transformation. E6 associates with host UBE3A/E6-AP ubiquitin-protein ligase and modulates its activity. Protects host keratinocytes from apoptosis by mediating the degradation of host BAK1. May also inhibit host immune response. The sequence is that of Protein E6 from Bos taurus (Bovine).